Here is a 357-residue protein sequence, read N- to C-terminus: 3-isopropylmalate dehydrogenase (357 aa).

75–88 (GPKWEHLPPAEQPE) is an NAD(+) binding site. Residues Arg96, Arg106, Arg135, and Asp224 each coordinate substrate. Mg(2+) is bound by residues Asp224, Asp248, and Asp252. Residue 282 to 294 (GSAPDIAGQGIAN) coordinates NAD(+).

The protein belongs to the isocitrate and isopropylmalate dehydrogenases family. LeuB type 1 subfamily. In terms of assembly, homodimer. It depends on Mg(2+) as a cofactor. Requires Mn(2+) as cofactor.

It is found in the cytoplasm. It carries out the reaction (2R,3S)-3-isopropylmalate + NAD(+) = 4-methyl-2-oxopentanoate + CO2 + NADH. Its pathway is amino-acid biosynthesis; L-leucine biosynthesis; L-leucine from 3-methyl-2-oxobutanoate: step 3/4. Catalyzes the oxidation of 3-carboxy-2-hydroxy-4-methylpentanoate (3-isopropylmalate) to 3-carboxy-4-methyl-2-oxopentanoate. The product decarboxylates to 4-methyl-2 oxopentanoate. This Desulfotalea psychrophila (strain LSv54 / DSM 12343) protein is 3-isopropylmalate dehydrogenase.